The chain runs to 139 residues: Large-conductance mechanosensitive channel (139 aa).

A run of 2 helical transmembrane segments spans residues 16–36 and 83–103; these read VIDL…VDSL and GQFI…FVAV.

The protein belongs to the MscL family. Homopentamer.

It localises to the cell inner membrane. Functionally, channel that opens in response to stretch forces in the membrane lipid bilayer. May participate in the regulation of osmotic pressure changes within the cell. The polypeptide is Large-conductance mechanosensitive channel (Aromatoleum aromaticum (strain DSM 19018 / LMG 30748 / EbN1) (Azoarcus sp. (strain EbN1))).